Reading from the N-terminus, the 222-residue chain is Uracil-DNA glycosylase (222 aa).

Asp-66 serves as the catalytic Proton acceptor.

It belongs to the uracil-DNA glycosylase (UDG) superfamily. UNG family.

The protein resides in the cytoplasm. It carries out the reaction Hydrolyzes single-stranded DNA or mismatched double-stranded DNA and polynucleotides, releasing free uracil.. Its function is as follows. Excises uracil residues from the DNA which can arise as a result of misincorporation of dUMP residues by DNA polymerase or due to deamination of cytosine. The protein is Uracil-DNA glycosylase of Porphyromonas gingivalis (strain ATCC BAA-308 / W83).